We begin with the raw amino-acid sequence, 108 residues long: Cytochrome c6 (108 aa).

The signal sequence occupies residues 1 to 23 (MRLLFAFFIICHIFTNNVQLTFA). Positions 37, 40, 41, and 81 each coordinate heme c.

Belongs to the cytochrome c family. PetJ subfamily. As to quaternary structure, monomer. Post-translationally, binds 1 heme c group covalently per subunit.

It localises to the plastid. The protein resides in the chloroplast thylakoid lumen. Functionally, functions as an electron carrier between membrane-bound cytochrome b6-f and photosystem I in oxygenic photosynthesis. In Gracilaria tenuistipitata var. liui (Red alga), this protein is Cytochrome c6.